A 408-amino-acid polypeptide reads, in one-letter code: Triose phosphate/phosphate translocator, chloroplastic (408 aa).

The N-terminal 82 residues, 1 to 82 (MESRVLSSGA…VKRDVLKPCT (82 aa)), are a transit peptide targeting the chloroplast. At 83 to 102 (ATASDSAGDAAPVGFFAKYP) the chain is on the chloroplast intermembrane side. A helical membrane pass occupies residues 103-123 (FLVTGFFFFMWYFLNVIFNIL). Residues 124–135 (NKKIYNYFPYPY) lie on the Lumenal side of the membrane. The chain crosses the membrane as a helical span at residues 136 to 156 (FVSAIHLAVGVVYCLGGWAVG). Over 157–213 (LPKRAPMDSNLLKLLIPVAFCHALGHVTSNVSFAAVAVSFTHTIKSLEPFFNAAASQ) the chain is Chloroplast intermembrane. Residues 214–234 (FILGQSIPITLWLSLAPVVIG) form a helical membrane-spanning segment. Topologically, residues 235-278 (VSMASLTELSFNWLGFISAMISNISFTYRSIYSKKAMTDMDSTN) are lumenal. Residues 279-298 (LYAYISIISLLFCIPPAIIL) form a helical membrane-spanning segment. Over 299–376 (EGPQLLKHGF…IVFGNKISTQ (78 aa)) the chain is Chloroplast intermembrane. Residues 377–397 (TAIGTSIAIAGVAVYSLIKAK) traverse the membrane as a helical segment. The Lumenal portion of the chain corresponds to 398-408 (IEEEKRGLKSA).

This sequence belongs to the TPT transporter family. TPT (TC 2.A.7.9) subfamily. Homodimer.

The protein resides in the plastid. It localises to the chloroplast membrane. Functionally, mediates the export of fixed carbons from the chloroplasts into the cytosol in the form of triose phosphates. The protein is Triose phosphate/phosphate translocator, chloroplastic (TPT) of Flaveria pringlei.